Consider the following 319-residue polypeptide: MFRARHLLGIEPLAPPEITTLLDLAETYVDLNRRTVKHSDALAGMTQINMFFENSTRTQSSFELAGKRLGADVMNMAMQTSSVKKGETLIDTALTLNAMHPDLLVVRHPQSGAVDLLAQKVNCAVLNAGDGRHEHPTQALLDALTIRRAKGRLHRLTVAICGDIAHSRVARSNLILLGKMENRLRLVGPATLMPSGARDWGCEIHEDMREGLKGADVVMMLRLQKERMDGGFIPSEREYYHRWGLDAEKLALAAPDAIVMHPGPMNRGVEIDGTIADDINRSVIQDQVEMGVAVRMAAMDLLARNLRAERGAKAAEMMA.

The carbamoyl phosphate site is built by R57 and T58. K85 is a binding site for L-aspartate. The carbamoyl phosphate site is built by R107, H135, and Q138. The L-aspartate site is built by R168 and R222. Positions 263 and 264 each coordinate carbamoyl phosphate.

The protein belongs to the aspartate/ornithine carbamoyltransferase superfamily. ATCase family. As to quaternary structure, heterododecamer (2C3:3R2) of six catalytic PyrB chains organized as two trimers (C3), and six regulatory PyrI chains organized as three dimers (R2).

The catalysed reaction is carbamoyl phosphate + L-aspartate = N-carbamoyl-L-aspartate + phosphate + H(+). It participates in pyrimidine metabolism; UMP biosynthesis via de novo pathway; (S)-dihydroorotate from bicarbonate: step 2/3. Functionally, catalyzes the condensation of carbamoyl phosphate and aspartate to form carbamoyl aspartate and inorganic phosphate, the committed step in the de novo pyrimidine nucleotide biosynthesis pathway. In Paracoccus denitrificans (strain Pd 1222), this protein is Aspartate carbamoyltransferase catalytic subunit.